The following is a 231-amino-acid chain: DNA mismatch repair protein MutH (231 aa).

It belongs to the MutH family.

The protein localises to the cytoplasm. Sequence-specific endonuclease that cleaves unmethylated GATC sequences. It is involved in DNA mismatch repair. The chain is DNA mismatch repair protein MutH from Shewanella woodyi (strain ATCC 51908 / MS32).